The primary structure comprises 515 residues: Lysine--tRNA ligase (515 aa).

Mg(2+) is bound by residues Glu-425 and Glu-432.

It belongs to the class-II aminoacyl-tRNA synthetase family. As to quaternary structure, homodimer. Requires Mg(2+) as cofactor.

Its subcellular location is the cytoplasm. It catalyses the reaction tRNA(Lys) + L-lysine + ATP = L-lysyl-tRNA(Lys) + AMP + diphosphate. The chain is Lysine--tRNA ligase from Cupriavidus metallidurans (strain ATCC 43123 / DSM 2839 / NBRC 102507 / CH34) (Ralstonia metallidurans).